We begin with the raw amino-acid sequence, 78 residues long: Conotoxin 6 (78 aa).

The N-terminal stretch at 1-22 (MKLTCMMIVAVLFLTAWIFITA) is a signal peptide. Positions 23–51 (DNSRNGIENLPRMRRHEMKNPKASKLNKR) are excised as a propeptide. Disulfide bonds link Cys-53-Cys-69, Cys-60-Cys-73, and Cys-68-Cys-77.

The protein belongs to the conotoxin O1 superfamily. Expressed by the venom duct.

Its subcellular location is the secreted. The protein is Conotoxin 6 of Conus imperialis (Imperial cone).